We begin with the raw amino-acid sequence, 25 residues long: Toxin LyeTx 1 (25 aa).

Leu25 is subject to Leucine amide.

As to expression, expressed by the venom gland.

It is found in the secreted. Has antimicrobial activity against Gram-positive bacterium S.aureus (MIC=3.79 uM), Gram-negative bacterium E.coli (MIC=7.81 uM) and yeasts C.krusei (MIC=26.3 uM) and C.neoformans (MIC=13.2 uM). Has hemolytic activity against rabbit erythrocytes. Forms pores in lipid bilayers in vitro; pore formation is reduced when cholesterol is present in the bilayers. This is Toxin LyeTx 1 from Lycosa erythrognatha (Wolf spider).